The following is a 414-amino-acid chain: MRVGGAFHLLLVCLSPALLSAVRINGDGQEVLYLAEGDNVRLGCPYVLDPEDYGPNGLDIEWMQVNSDPAHHRENVFLSYQDKRINHGSLPHLQQRVRFAASDPSQYDASINLMNLQVSDTATYECRVKKTTMATRKVIVTVQARPAVPMCWTEGHMTYGNDVVLKCYASGGSQPLSYKWAKISGHHYPYRAGSYTSQHSYHSELSYQESFHSSINQGLNNGDLVLKDISRADDGLYQCTVANNVGYSVCVVEVKVSDSRRIGVIIGIVLGSLLALGCLAVGIWGLVCCCCGGSGAGGARGAFGYGNGGGVGGGACGDLASEIREDAVAPGCKASGRGSRVTHLLGYPTQNVSRSLRRKYAPPPCGGPEDVALAPCTAAAACEAGPSPVYVKVKSAEPADCAEGPVQCKNGLLV.

Residues 1–21 form the signal peptide; the sequence is MRVGGAFHLLLVCLSPALLSA. Ig-like V-type domains lie at 22-141 and 146-257; these read VRIN…VIVT and PAVP…VKVS. At 22-263 the chain is on the extracellular side; the sequence is VRINGDGQEV…VKVSDSRRIG (242 aa). Disulfide bonds link C44/C126 and C167/C239. The chain crosses the membrane as a helical span at residues 264 to 284; the sequence is VIIGIVLGSLLALGCLAVGIW. The Cytoplasmic segment spans residues 285 to 414; that stretch reads GLVCCCCGGS…PVQCKNGLLV (130 aa).

The protein resides in the membrane. The sequence is that of V-set and immunoglobulin domain-containing protein 8 from Homo sapiens (Human).